The sequence spans 399 residues: Galactokinase (399 aa).

Residue 42–45 (EHTD) coordinates substrate. Residues S76 and 133-139 (ASGLSSS) each bind ATP. Mg(2+) contacts are provided by S139 and E171. D183 (proton acceptor) is an active-site residue. Y233 contacts substrate.

It belongs to the GHMP kinase family. GalK subfamily.

It localises to the cytoplasm. It carries out the reaction alpha-D-galactose + ATP = alpha-D-galactose 1-phosphate + ADP + H(+). Its pathway is carbohydrate metabolism; galactose metabolism. Its function is as follows. Catalyzes the transfer of the gamma-phosphate of ATP to D-galactose to form alpha-D-galactose-1-phosphate (Gal-1-P). This chain is Galactokinase, found in Lactococcus lactis subsp. cremoris (strain MG1363).